The sequence spans 267 residues: Tryptophan synthase alpha chain (267 aa).

Residues E43 and D54 each act as proton acceptor in the active site.

This sequence belongs to the TrpA family. As to quaternary structure, tetramer of two alpha and two beta chains.

It catalyses the reaction (1S,2R)-1-C-(indol-3-yl)glycerol 3-phosphate + L-serine = D-glyceraldehyde 3-phosphate + L-tryptophan + H2O. Its pathway is amino-acid biosynthesis; L-tryptophan biosynthesis; L-tryptophan from chorismate: step 5/5. The alpha subunit is responsible for the aldol cleavage of indoleglycerol phosphate to indole and glyceraldehyde 3-phosphate. The sequence is that of Tryptophan synthase alpha chain from Bacillus subtilis (strain 168).